Reading from the N-terminus, the 288-residue chain is Protein shisa-2 (288 aa).

An N-terminal signal peptide occupies residues 1–23 (MWLEGSPLAVLAAVSFLLSVLAA). Residues 24–110 (AQGSGEYCHG…DSTAVPIYVP (87 aa)) are Extracellular-facing. A helical membrane pass occupies residues 111–131 (FLIVGSVFVAFIIVGSLVAIC). At 132–288 (CCRCLRPKQE…EQMMYPAVTV (157 aa)) the chain is on the cytoplasmic side. Residues 161–188 (SSASTSRGSSSRQSSTAASSSSSANSGA) are compositionally biased toward low complexity. Residues 161–198 (SSASTSRGSSSRQSSTAASSSSSANSGARPPPTRSQTN) form a disordered region.

It belongs to the shisa family. In terms of assembly, interacts with fzd8 and fgfr1.

Its subcellular location is the endoplasmic reticulum membrane. Plays an essential role in the maturation of presomitic mesoderm cells by individual attenuation of both fgf and wnt signaling. Inhibits both wnt and fgf signaling through the regulation of protein maturation and cell surface transportation of their receptors within the endoplasmic reticulum. This Xenopus laevis (African clawed frog) protein is Protein shisa-2 (shisa2).